The chain runs to 595 residues: MKNIRNFSIIAHIDHGKSTIADRFIQFCGGLSDREMSAQVLDSMDIEKERGITIKSQSVTLDYQARNNETYQLNFIDTPGHVDFSYEVSRSLSACEGALLIVDASQGVEAQTIANCYTALDQGLEVVPVLNKIDLPAADPDRVVDEIEDVIGVEAHDAVYASAKSGMGIEDILEQIVEKIPAPKGNIDSPIKALIIDSWFDNYLGVVSLIRVIDGEIRTKTKIKIFSNGKEHLVDEVGVFRPKRKKTNSLKAGEVGFLIASIKNIDGAPVGDTITGAKNSASKPLEGFKPVQPRVFSGIFPISGEDYEKFRDALAKLRLNDAALQYEPENSDALGFGFRIGFLGLLHMEIVQERLEREYNLNLITTAPTVIYEILDTKGVIYRIDSPSKIPINQSIAEFREPIITANILVTDEYVGVIISLCVEKRGVQKNITYMGGQVSLVYELPLNEVVFDFFDRLKSISRGFASMDYRFERYQKSDLIRLDIMINQEPVDVLALIIHRNDSVHKGRELVEKMKKLIPRQMFDVTIQACIGSKIISRSNVKALRKNVTAKCYGGDISRKRKLLDKQKKGKKRMRSVGKVNIPQEVFLAVLHID.

Positions 2–184 (KNIRNFSIIA…QIVEKIPAPK (183 aa)) constitute a tr-type G domain. GTP-binding positions include 14-19 (DHGKST) and 131-134 (NKID).

The protein belongs to the TRAFAC class translation factor GTPase superfamily. Classic translation factor GTPase family. LepA subfamily.

The protein resides in the cell inner membrane. It carries out the reaction GTP + H2O = GDP + phosphate + H(+). Functionally, required for accurate and efficient protein synthesis under certain stress conditions. May act as a fidelity factor of the translation reaction, by catalyzing a one-codon backward translocation of tRNAs on improperly translocated ribosomes. Back-translocation proceeds from a post-translocation (POST) complex to a pre-translocation (PRE) complex, thus giving elongation factor G a second chance to translocate the tRNAs correctly. Binds to ribosomes in a GTP-dependent manner. The protein is Elongation factor 4 of Ruthia magnifica subsp. Calyptogena magnifica.